Here is a 702-residue protein sequence, read N- to C-terminus: Elongation factor G (702 aa).

The tr-type G domain maps to 9–292 (DRTRNIGIMA…AVVDYLPSPL (284 aa)). GTP-binding positions include 18–25 (AHIDAGKT), 91–95 (DTPGH), and 145–148 (NKMD).

Belongs to the TRAFAC class translation factor GTPase superfamily. Classic translation factor GTPase family. EF-G/EF-2 subfamily.

The protein localises to the cytoplasm. In terms of biological role, catalyzes the GTP-dependent ribosomal translocation step during translation elongation. During this step, the ribosome changes from the pre-translocational (PRE) to the post-translocational (POST) state as the newly formed A-site-bound peptidyl-tRNA and P-site-bound deacylated tRNA move to the P and E sites, respectively. Catalyzes the coordinated movement of the two tRNA molecules, the mRNA and conformational changes in the ribosome. The protein is Elongation factor G of Oenococcus oeni (strain ATCC BAA-331 / PSU-1).